The following is a 292-amino-acid chain: Ribosomal protein L11 methyltransferase (292 aa).

Residues Thr-136, Gly-159, Asp-181, and Asn-228 each contribute to the S-adenosyl-L-methionine site.

Belongs to the methyltransferase superfamily. PrmA family.

Its subcellular location is the cytoplasm. The catalysed reaction is L-lysyl-[protein] + 3 S-adenosyl-L-methionine = N(6),N(6),N(6)-trimethyl-L-lysyl-[protein] + 3 S-adenosyl-L-homocysteine + 3 H(+). Methylates ribosomal protein L11. This chain is Ribosomal protein L11 methyltransferase, found in Rhizobium rhizogenes (strain K84 / ATCC BAA-868) (Agrobacterium radiobacter).